The sequence spans 288 residues: Protein FANTASTIC FOUR 3 (288 aa).

The segment covering 48-60 (HAEDTRNRNDDKA) has biased composition (basic and acidic residues). Disordered stretches follow at residues 48-100 (HAED…YYVQ), 146-172 (ETTT…PLTT), and 222-261 (NEFV…IENV). Over residues 66–90 (SDSSGWSSLQSLSSGSSSSTKTTTS) the composition is skewed to low complexity. The FAF domain occupies 165 to 217 (DLPPPLTTMRGFQCIQMRPHRENGRLVMTATNAPPRNGCFQADRSNGRLRLSI). Acidic residues predominate over residues 223–256 (EFVENEEETIEPEETEEYEEEEEEEEDEDEDEVM).

It belongs to the fantastic four family. As to expression, expressed in the shoot apex, stamens, young leaves and young siliques, but not in old leaves. Detected in provascular and vascular tissue, but not in the vegetative meristem. In inflorescences, restricted to the vasculature and absent from young flowers, except from anthers.

In terms of biological role, able to repress WUS when constitutively overexpressed, but have no effect on CLV3. The sequence is that of Protein FANTASTIC FOUR 3 (FAF3) from Arabidopsis thaliana (Mouse-ear cress).